We begin with the raw amino-acid sequence, 179 residues long: Large ribosomal subunit protein uL6 (179 aa).

It belongs to the universal ribosomal protein uL6 family. As to quaternary structure, part of the 50S ribosomal subunit.

This protein binds to the 23S rRNA, and is important in its secondary structure. It is located near the subunit interface in the base of the L7/L12 stalk, and near the tRNA binding site of the peptidyltransferase center. This Mycobacterium avium (strain 104) protein is Large ribosomal subunit protein uL6.